Here is a 61-residue protein sequence, read N- to C-terminus: Large ribosomal subunit protein bL32 (61 aa).

The interval 1–44 (MAVQQNRKSRSRRDMRRSHDALTENALTVDQATGETHRRHHVTK) is disordered. Residues 7-16 (RKSRSRRDMR) show a composition bias toward basic residues. Residues 25–34 (NALTVDQATG) show a composition bias toward polar residues.

Belongs to the bacterial ribosomal protein bL32 family.

This is Large ribosomal subunit protein bL32 from Acinetobacter baumannii (strain AB307-0294).